A 116-amino-acid chain; its full sequence is Large ribosomal subunit protein eL22B (116 aa).

This sequence belongs to the eukaryotic ribosomal protein eL22 family.

This chain is Large ribosomal subunit protein eL22B (rpl22a), found in Dictyostelium discoideum (Social amoeba).